The chain runs to 491 residues: MRVSIPPELVSSLGACDLRVTVRGEGIDKYPGGPGAAKQHARKVAMKLGVSSGLIYLVGKPTINWGDSDQPQPFRQRRYFYYLSGADEPDCYLTYDINNDLLVLYVPDFDLHRAIWMGPTLTTDEAERRFDVDKVRYYASLQSDIQSWVGKYNDAAPVYILHSSQQPQFSVQQLHIDDQRLLPAMDAARVVKDDYELRMIRHANKISGLAHRKVLEQIHKMSNEAQIEGLFLDTCVSHGAKNQAYEIIAGSGPNAATLHYVKNNEPLKGRQLVCLDAGAEWECYASDVTRTFPLAADWPSSHARDVYQIVEEMQEQCIKRIKPGVRFRDLQVLAHDIAIRGLQKLGVLKPGTVEEIRVSGASAIFFPHGLGHHVGLEVHDVSEKPITGMGLPNRPCRPDFIPAMSQSVPLLEEGMVVTIEPGVYFSKLALANSRKLPQARYINFDEAEKYIPIGGVRIEDDILVTRTGYENLTTAPKGDEMLEIIRRGIDN.

D276, D287, E420, and E459 together coordinate Mn(2+).

Belongs to the peptidase M24B family. Mn(2+) is required as a cofactor.

The catalysed reaction is Release of any N-terminal amino acid, including proline, that is linked to proline, even from a dipeptide or tripeptide.. Functionally, catalyzes the removal of a penultimate prolyl residue from the N-termini of peptides. The sequence is that of Probable Xaa-Pro aminopeptidase An01g13040 from Aspergillus niger (strain ATCC MYA-4892 / CBS 513.88 / FGSC A1513).